Reading from the N-terminus, the 78-residue chain is MSRVCQVTGKRPAVGNNRSHAKNATKRRFLPNLQTHRFWVESEKRFVKLRLTAKGMRIIDKKGIDVVLSEMRARGENV.

Positions 1-25 (MSRVCQVTGKRPAVGNNRSHAKNAT) are disordered.

Belongs to the bacterial ribosomal protein bL28 family.

This Aliivibrio salmonicida (strain LFI1238) (Vibrio salmonicida (strain LFI1238)) protein is Large ribosomal subunit protein bL28.